Reading from the N-terminus, the 307-residue chain is Ornithine carbamoyltransferase (307 aa).

Residues 51 to 54 (STRT), Gln78, Arg102, and 129 to 132 (HPCQ) contribute to the carbamoyl phosphate site. Residues Asn160, Asp220, and 224-225 (SM) contribute to the L-ornithine site. Carbamoyl phosphate contacts are provided by residues 260–261 (CL) and Arg288.

Belongs to the aspartate/ornithine carbamoyltransferase superfamily. OTCase family.

It localises to the cytoplasm. The enzyme catalyses carbamoyl phosphate + L-ornithine = L-citrulline + phosphate + H(+). It participates in amino-acid biosynthesis; L-arginine biosynthesis; L-arginine from L-ornithine and carbamoyl phosphate: step 1/3. Functionally, reversibly catalyzes the transfer of the carbamoyl group from carbamoyl phosphate (CP) to the N(epsilon) atom of ornithine (ORN) to produce L-citrulline. This Archaeoglobus fulgidus (strain ATCC 49558 / DSM 4304 / JCM 9628 / NBRC 100126 / VC-16) protein is Ornithine carbamoyltransferase (argF).